We begin with the raw amino-acid sequence, 257 residues long: Short-chain dehydrogenase reductase 3b (257 aa).

12–36 serves as a coordination point for NAD(+); the sequence is IITGGASGIGAESVRLFTEHGARVV. A substrate-binding site is contributed by Ser144. The Proton acceptor role is filled by Tyr157.

This sequence belongs to the short-chain dehydrogenases/reductases (SDR) family.

The chain is Short-chain dehydrogenase reductase 3b (SDR3b) from Arabidopsis thaliana (Mouse-ear cress).